A 462-amino-acid polypeptide reads, in one-letter code: Sugar transporter ERD6-like 12 (462 aa).

12 helical membrane passes run 25-45 (LLIF…AAIG), 62-82 (LAQF…GAIF), 101-121 (LFCI…WLDM), 124-144 (FLVG…IAEI), 151-171 (GAFT…VYYF), 179-199 (TLAI…FFIP), 262-282 (LTIG…GISS), 297-317 (IGMM…LILV), 326-346 (LMTS…AFGV), 358-378 (IFCF…MGAL), 399-419 (VTIA…FMLV), and 424-444 (GTFI…WCLV).

The protein belongs to the major facilitator superfamily. Sugar transporter (TC 2.A.1.1) family.

It is found in the membrane. In terms of biological role, sugar transporter. The chain is Sugar transporter ERD6-like 12 (SUGTL5) from Arabidopsis thaliana (Mouse-ear cress).